Here is a 186-residue protein sequence, read N- to C-terminus: Hydra actinoporin-like toxin 5 (186 aa).

Residues 1–20 (MLLYVCLVNLLLQSPSGVDS) form the signal peptide. The Cell attachment site motif lies at 158–160 (RDG).

Belongs to the actinoporin family. HALT subfamily. As to quaternary structure, octamer or nonamer in membranes. Monomer in the soluble state. In vitro, interacts with folate receptor alpha (of target organism).

The protein localises to the nematocyst. Its subcellular location is the secreted. The protein resides in the target cell membrane. Functionally, pore-forming protein that forms hydrophilic pores and causes cytolysis. Compared to equinatoxin-2 (AC P61914), it reveals lower cytolysis activity (5-12-fold difference, tested on erythrocytes), a larger pore size (probably 2-3 nm) and different affinity to membrane lipids (100-fold lower affinity to sphingomyelin). Binds to sulfatides (SFT) as well as to the two sphingolipids, lysophosphatidic acid (LPA) and sphingosine-1-phosphate (S1P). It seems to bind more strongly to LPA than to S1P and SFT. Shows cytolytic activity on HeLa cells, with a different potency than its paralogs (from most potent to less potent: HALT-4&gt;HALT-6~HALT-1&gt;HALT-3&gt;HALT-7&gt;HALT-2). Pore formation is a multi-step process that involves specific recognition of membrane lipid by a protein aromatic residues rich region, firm binding to the membrane (mainly driven by hydrophobic interactions) accompanied by the transfer of the N-terminal region to the lipid-water interface and finally pore formation after oligomerization of monomers. In vitro, binds to the folate receptor alpha (FOLR1), a GPI-anchored membrane protein that plays a major role in the uptake of folate/folic acid into cells via endocytosis, suggesting a possible involvement of this receptor in the mechanism of HALT-1-induced cell lysis. In vivo, does not cause visible paralysis in larvae of the blowfly Sarcophaga faculata, the most common arthropod prey of Hydra. The protein is Hydra actinoporin-like toxin 5 of Hydra vulgaris (Hydra).